We begin with the raw amino-acid sequence, 358 residues long: Peptide chain release factor 1 (358 aa).

Glutamine 237 carries the N5-methylglutamine modification. Residues 291–309 (EESGYRKLAGHGDRSEKIR) show a composition bias toward basic and acidic residues. Residues 291–313 (EESGYRKLAGHGDRSEKIRTYNY) are disordered.

It belongs to the prokaryotic/mitochondrial release factor family. Post-translationally, methylated by PrmC. Methylation increases the termination efficiency of RF1.

The protein localises to the cytoplasm. Its function is as follows. Peptide chain release factor 1 directs the termination of translation in response to the peptide chain termination codons UAG and UAA. In Mycoplasmopsis agalactiae (strain NCTC 10123 / CIP 59.7 / PG2) (Mycoplasma agalactiae), this protein is Peptide chain release factor 1.